Consider the following 83-residue polypeptide: Small ribosomal subunit protein bS16 (83 aa).

Belongs to the bacterial ribosomal protein bS16 family.

In Cupriavidus taiwanensis (strain DSM 17343 / BCRC 17206 / CCUG 44338 / CIP 107171 / LMG 19424 / R1) (Ralstonia taiwanensis (strain LMG 19424)), this protein is Small ribosomal subunit protein bS16.